Here is a 349-residue protein sequence, read N- to C-terminus: GDSL esterase/lipase At1g58725 (349 aa).

The N-terminal stretch at 1-19 (MKIQILLFALVLIFVEANA) is a signal peptide. An N-linked (GlcNAc...) asparagine glycan is attached at N25. The active-site Nucleophile is the S37. N316 carries an N-linked (GlcNAc...) asparagine glycan. Catalysis depends on residues D324 and H327.

This sequence belongs to the 'GDSL' lipolytic enzyme family.

It is found in the secreted. The protein is GDSL esterase/lipase At1g58725 of Arabidopsis thaliana (Mouse-ear cress).